We begin with the raw amino-acid sequence, 363 residues long: Homeobox protein Hox-A2 (363 aa).

2 disordered regions span residues Thr-23 to Leu-133 and Met-183 to Lys-216. Composition is skewed to polar residues over residues Thr-31–Thr-46 and Thr-55–Ser-78. Positions Glu-88–Lys-93 match the Antp-type hexapeptide motif. The homeobox DNA-binding region spans Ser-130–Thr-189.

It belongs to the Antp homeobox family. Proboscipedia subfamily.

It is found in the nucleus. In terms of biological role, sequence-specific transcription factor which is part of a developmental regulatory system that provides cells with specific positional identities on the anterior-posterior axis. The chain is Homeobox protein Hox-A2 (HOXA2) from Heterodontus francisci (Horn shark).